The following is a 518-amino-acid chain: Histone deacetylase 1 (518 aa).

The tract at residues 22-333 is histone deacetylase; it reads RRVCYFYDAE…WCYETGVALG (312 aa). H153 acts as the Proton donor/acceptor in catalysis. Zn(2+) is bound by residues D188, H190, and D276. The segment at 387 to 518 is disordered; that stretch reads HAPSVQFQER…QDQPSVHQKT (132 aa). Acidic residues predominate over residues 401–412; that stretch reads ELPEQDEDQEDP. Positions 413 to 435 are enriched in basic and acidic residues; it reads DERHHADSDVEMDDVKPLDDSGR. The span at 503 to 518 shows a compositional bias: polar residues; the sequence is DNSNKLQDQPSVHQKT.

Belongs to the histone deacetylase family. HD Type 1 subfamily. Interacts with TPR3. Zn(2+) serves as cofactor. As to expression, expressed in roots and leaves.

The protein localises to the nucleus. The enzyme catalyses N(6)-acetyl-L-lysyl-[histone] + H2O = L-lysyl-[histone] + acetate. Responsible for the deacetylation of lysine residues on the N-terminal part of the core histones (H2A, H2B, H3 and H4). Histone deacetylation gives a tag for epigenetic repression and plays an important role in transcriptional regulation, cell cycle progression and developmental events. Histone deacetylases act via the formation of large multiprotein complexes. Negatively regulates the expression of the NAC48/NAC6 gene that controls root growth in seedlings. Epigenetically represses the expression of NAC48/NAC6 by deacetylating 'Lys-9' (H3K9ac), 'Lys-14' (H3K14ac) and 'Lys-18' (H3K18ac) of histone H3, and 'Lys-5' (H4K5ac), 'Lys-12' (H4K12ac) and 'Lys-16' (H4K16ac) of histone H4. Functions in the regulation of gene expression in the whole genome. Acts as a chromatin remodeling regulator to promote the formation of a repressive chromatin state. Functions with MODD via its interaction with TPR3, to down-regulates the histone acetylation level at BZIP46 target genes. BZIP46 is a positive regulator of abscisic acid (ABA) signaling and drought stress tolerance. In Oryza sativa subsp. japonica (Rice), this protein is Histone deacetylase 1.